Reading from the N-terminus, the 218-residue chain is Ropporin-1-like protein (218 aa).

The 38-residue stretch at P17–P54 folds into the RIIa domain.

Belongs to the ropporin family. As to quaternary structure, component of the axonemal radial spoke complex 1 (RS1), at least composed of spoke head proteins RSPH1, RSPH3, RSPH9 and the cilia-specific component RSPH4A or sperm-specific component RSPH6A, spoke stalk proteins RSPH14, DNAJB13, DYDC1, ROPN1L and NME5, and the anchor protein IQUB. May interact with AKAP3. Interacts with FSCB; the interaction increases upon spermatozoa capacitation conditions. Interacts with CFAP61. In terms of processing, sumoylated, sumoylation decreases upon spermatozoa capacitation conditions. In terms of tissue distribution, testis-specific. Expression is restricted to germ cells.

Its subcellular location is the cell projection. It is found in the cilium. The protein localises to the flagellum. Its function is as follows. Functions as part of axonemal radial spoke complexes that play an important part in the motility of sperm and cilia. Important for male fertility. With ROPN1, involved in fibrous sheath integrity and sperm motility, plays a role in PKA-dependent signaling processes required for spermatozoa capacitation. The polypeptide is Ropporin-1-like protein (Ropn1l) (Mus musculus (Mouse)).